The chain runs to 751 residues: Photosystem I P700 chlorophyll a apoprotein A1 (751 aa).

8 helical membrane-spanning segments follow: residues 73-96 (VFSAHFGQLGIIFIWLSGMYFHGA), 159-182 (LYATAIGGLVMAAAMFFAGWFHYH), 198-222 (MNHHLAGLLGLGSLAWAGHQIHISL), 294-312 (EAHHHLAIAVLFLIAGHQY), 349-372 (WHAQLAINLAMLGSLSIIVAHHMY), 388-414 (LSLFTHHVWIGGFCIVGAGAHAAIFMV), 436-458 (AIISHLNWVCIFLGFHSFGLYIH), and 533-551 (FLVHHIHAFTIHVTVLILL). [4Fe-4S] cluster-binding residues include Cys575 and Cys584. The next 2 membrane-spanning stretches (helical) occupy residues 591–612 (HVFLGLFWMYNSLSIVIFHFSW) and 665–687 (LSAYGLMFLGAHFVWAFSLMFLF). His676 lines the chlorophyll a' pocket. Chlorophyll a is bound by residues Met684 and Tyr692. Trp693 lines the phylloquinone pocket. A helical membrane pass occupies residues 725–745 (AVGVAHYLLGGIATTWSFFLA).

It belongs to the PsaA/PsaB family. The PsaA/B heterodimer binds the P700 chlorophyll special pair and subsequent electron acceptors. PSI consists of a core antenna complex that captures photons, and an electron transfer chain that converts photonic excitation into a charge separation. The eukaryotic PSI reaction center is composed of at least 11 subunits. P700 is a chlorophyll a/chlorophyll a' dimer, A0 is one or more chlorophyll a, A1 is one or both phylloquinones and FX is a shared 4Fe-4S iron-sulfur center. is required as a cofactor.

Its subcellular location is the plastid. The protein localises to the chloroplast thylakoid membrane. It carries out the reaction reduced [plastocyanin] + hnu + oxidized [2Fe-2S]-[ferredoxin] = oxidized [plastocyanin] + reduced [2Fe-2S]-[ferredoxin]. Its function is as follows. PsaA and PsaB bind P700, the primary electron donor of photosystem I (PSI), as well as the electron acceptors A0, A1 and FX. PSI is a plastocyanin/cytochrome c6-ferredoxin oxidoreductase, converting photonic excitation into a charge separation, which transfers an electron from the donor P700 chlorophyll pair to the spectroscopically characterized acceptors A0, A1, FX, FA and FB in turn. Oxidized P700 is reduced on the lumenal side of the thylakoid membrane by plastocyanin or cytochrome c6. The sequence is that of Photosystem I P700 chlorophyll a apoprotein A1 from Oltmannsiellopsis viridis (Marine flagellate).